A 363-amino-acid chain; its full sequence is G-protein coupled receptor 4 (363 aa).

Residues 1–8 (MGNGTWEG) lie on the Extracellular side of the membrane. N-linked (GlcNAc...) asparagine glycosylation is present at Asn-3. Residues 9–45 (CHVDSRVDHLFPPSLYIFVIGVGLPTNCLALWAAYRQ) traverse the membrane as a helical segment. Intrachain disulfides connect Cys-9-Cys-258 and Cys-90-Cys-168. Residues 46 to 49 (VRQR) lie on the Cytoplasmic side of the membrane. Residues 50-80 (NELGVYLMNLSIADLLYICTLPLWVDYFLHH) traverse the membrane as a helical segment. At 81–85 (DNWIH) the chain is on the extracellular side. Residues 86 to 121 (GPGSCKLFGFIFYTNIYISIAFLCCISVDRYLAVAH) form a helical membrane-spanning segment. Residues 122-129 (PLRFARLR) are Cytoplasmic-facing. A helical membrane pass occupies residues 130-156 (RVKTAVAVSSVVWATELGANSVPLFHD). Residues 157–172 (ELFRDRYNHTFCFEKF) lie on the Extracellular side of the membrane. The segment at 157 to 172 (ELFRDRYNHTFCFEKF) is extracellular loop 2 (ECL2). The N-linked (GlcNAc...) asparagine glycan is linked to Asn-164. A helical membrane pass occupies residues 173–210 (PMEGWVAWMNLYRVFVGFLFPWALMLLSYRGILRAVRG). The Cytoplasmic segment spans residues 211 to 214 (SVST). A helical transmembrane segment spans residues 215–250 (ERQEKAKIKRLALSLIAIVLVCFAPYHVLLLSRSAV). At 251 to 260 (YLGHPWDCGF) the chain is on the extracellular side. The helical transmembrane segment at 261–289 (EERVFSAYHSSLAFTSLNCVADPILYCLV) threads the bilayer. Residues 290 to 363 (NEGARSDVAK…QLKMLPPPAP (74 aa)) are Cytoplasmic-facing. Positions 344–363 (ASPPSQGDQVQLKMLPPPAP) are disordered.

This sequence belongs to the G-protein coupled receptor 1 family.

Its subcellular location is the cell membrane. With respect to regulation, activated by a network of residues that connects an extracellular-facing cavity to Glu-145, a conserved charged residue buried in the transmembrane core of the receptor. Protonation likely drives conformational changes in extracellular loop 2 (ECL2), which stabilizes movement of transmembrane 3 (TM3) and a series of rearrangements that connect the extracellular-facing cavity to Glu-145, a residue only conserved in proton-sensing G-protein coupled receptors. Proton-sensing G-protein coupled receptor activated by extracellular pH, which is required to monitor pH changes and generate adaptive reactions. Activated by an optimal pH of 6.8-7.2. Ligand binding causes a conformation change that triggers signaling via guanine nucleotide-binding proteins (G proteins) and modulates the activity of downstream effectors, such as adenylate cyclase. GPR4 is mainly coupled to G(s) G proteins and mediates activation of adenylate cyclase activity. May also couple with G(q) and G(12)/G(13) G proteins. Acts as a key regulator of respiratory sensitivity to CO2/H(+) in brain retrotrapezoid nucleus neurons: acts by mediating detection of protons generated by the formation of carbonic acid in the blood, an important mechanism to impulse to breathe. Also acts as a regulator of acid secretion in the kidney collecting duct by maintaining acid-base homeostasis in the kidney. Acidosis-induced GPR4 activation increases paracellular gap formation and permeability of vascular endothelial cells, possibly through the G(12)/G(13)/Rho GTPase signaling pathway. The sequence is that of G-protein coupled receptor 4 (GPR4) from Sus scrofa (Pig).